Reading from the N-terminus, the 215-residue chain is Serine acetyltransferase (215 aa).

Belongs to the transferase hexapeptide repeat family.

It localises to the cytoplasm. It catalyses the reaction L-serine + acetyl-CoA = O-acetyl-L-serine + CoA. It participates in amino-acid biosynthesis; L-cysteine biosynthesis; L-cysteine from L-serine: step 1/2. This chain is Serine acetyltransferase (cysE), found in Staphylococcus aureus (strain MRSA252).